Reading from the N-terminus, the 167-residue chain is Iron-sulfur cluster assembly enzyme ISCU (167 aa).

A mitochondrion-targeting transit peptide spans Met1 to Leu34. A Phosphoserine; by MTOR modification is found at Ser14. Pro46 contributes to the Zn(2+) binding site. Residue Cys69 is the Cysteine persulfide intermediate of the active site. Cys69 carries the cysteine persulfide modification. The Zn(2+) site is built by Gly70, Asp71, Cys95, Lys112, and Cys138. Residue Cys138 is the Cysteine persulfide intermediate of the active site. Cysteine persulfide is present on Cys138.

This sequence belongs to the NifU family. In terms of assembly, homodimer; Tyr-35-mediated dimerization of two iron- and sulfide-containing ISCU subunit bind to the cysteine desulfurase complex. Component of the mitochondrial core iron-sulfur cluster (ISC) complex composed of NFS1, LYRM4, NDUFAB1, ISCU, FXN, and FDX2; this complex is an heterohexamer containing two copies of each monomer. Interacts (D-state) with NFS1 (homodimer form); each monomer interacts with the C-terminal regions of each NFS1 monomer. Interacts (monomer form) with FXN (via ferrous form); the interaction is possible when both are bound to the dimeric form of the cysteine desulfurase complex (NFS1:LYRM4) and enhances FXN interaction to the dimeric form of the cysteine desulfurase complex (NFS1:LYRM4). Interacts with GLRX5. Interacts (D-state) with HSPA9. Interacts (S-state) with HSCB; this interaction stimulates the ATPase activity of HSPA9. Component of the cytoplasmic core iron-sulfur cluster (ISC) complex composed at least of NFS1, LYRM4, and ISCU; this complex interacts with FXN. Monomer; each monomer binds to the C-terminal regions of NFS1 (cytoplasmic and homodimer form). Interacts with NFS1 (cytoplasmic and homodimer form); this interaction promotes de novo iron-sulfur cluster formation. Interacts with HSCB (cytoplasmic form); this interaction stabilizes the (Fe-S) clusters on ISCU. In terms of processing, phosphorylation at Ser-14 is required for ISCU protein stabilization in the cytosol, whereas dephosphorylation of Ser-14, due to the inhibition of mTORC1 (mammalian target of rapamycin complex 1) complex, leads to degradation of the precursor form and ultimately to a decrease in the mitochondrial mature form. Cysteine persulfide is reduced by thiol-containing molecules such as glutathione and L-cysteine. In terms of tissue distribution, detected in heart, liver, skeletal muscle, brain, pancreas, kidney, lung and placenta.

The protein localises to the mitochondrion. It localises to the cytoplasm. It is found in the nucleus. Its function is as follows. Mitochondrial scaffold protein, of the core iron-sulfur cluster (ISC) assembly complex, that provides the structural architecture on which the [2Fe-2S] clusters are assembled. The core iron-sulfur cluster (ISC) assembly complex is involved in the de novo synthesis of a [2Fe-2S] cluster, the first step of the mitochondrial iron-sulfur protein biogenesis. This process is initiated by the cysteine desulfurase complex (NFS1:LYRM4:NDUFAB1) that produces persulfide which is delivered on the scaffold protein ISCU in a FXN-dependent manner. Then this complex is stabilized by FDX2 which provides reducing equivalents to accomplish the [2Fe-2S] cluster assembly. Finally, the [2Fe-2S] cluster is transferred from ISCU to chaperone proteins, including HSCB, HSPA9 and GLRX5. Exists as two slow interchanging conformational states, a structured (S) and disordered (D) form. May modulate NFS1 desulfurase activity in a zinc-dependent manner. Modulates the interaction between FXN and the cysteine desulfurase complex. In terms of biological role, cytoplasmic scaffold protein, of the cytoplasmic core iron-sulfur cluster (ISC) assembly complex that provides the structural architecture on which the Fe-S clusters are assembled and may be involved in the cytoplasmic iron-sulfur protein biogenesis. The polypeptide is Iron-sulfur cluster assembly enzyme ISCU (Homo sapiens (Human)).